Here is a 259-residue protein sequence, read N- to C-terminus: Phosphatidylserine decarboxylase proenzyme (259 aa).

Catalysis depends on charge relay system; for autoendoproteolytic cleavage activity residues Asp-86, His-142, and Ser-226. Residue Ser-226 is the Schiff-base intermediate with substrate; via pyruvic acid; for decarboxylase activity of the active site. The residue at position 226 (Ser-226) is a Pyruvic acid (Ser); by autocatalysis.

It belongs to the phosphatidylserine decarboxylase family. PSD-B subfamily. Prokaryotic type I sub-subfamily. Heterodimer of a large membrane-associated beta subunit and a small pyruvoyl-containing alpha subunit. It depends on pyruvate as a cofactor. In terms of processing, is synthesized initially as an inactive proenzyme. Formation of the active enzyme involves a self-maturation process in which the active site pyruvoyl group is generated from an internal serine residue via an autocatalytic post-translational modification. Two non-identical subunits are generated from the proenzyme in this reaction, and the pyruvate is formed at the N-terminus of the alpha chain, which is derived from the carboxyl end of the proenzyme. The autoendoproteolytic cleavage occurs by a canonical serine protease mechanism, in which the side chain hydroxyl group of the serine supplies its oxygen atom to form the C-terminus of the beta chain, while the remainder of the serine residue undergoes an oxidative deamination to produce ammonia and the pyruvoyl prosthetic group on the alpha chain. During this reaction, the Ser that is part of the protease active site of the proenzyme becomes the pyruvoyl prosthetic group, which constitutes an essential element of the active site of the mature decarboxylase.

The protein localises to the cell membrane. The enzyme catalyses a 1,2-diacyl-sn-glycero-3-phospho-L-serine + H(+) = a 1,2-diacyl-sn-glycero-3-phosphoethanolamine + CO2. Its pathway is phospholipid metabolism; phosphatidylethanolamine biosynthesis; phosphatidylethanolamine from CDP-diacylglycerol: step 2/2. Functionally, catalyzes the formation of phosphatidylethanolamine (PtdEtn) from phosphatidylserine (PtdSer). This chain is Phosphatidylserine decarboxylase proenzyme, found in Geobacillus sp. (strain WCH70).